The primary structure comprises 444 residues: Deoxyguanosinetriphosphate triphosphohydrolase-like protein (444 aa).

Residues 1 to 28 form a disordered region; it reads MTDAVWNERRLGEDKQRRNDHRSPYQRD. An HD domain is found at 59–250; sequence RLTHSLEVSQ…MELADDIAYA (192 aa).

The protein belongs to the dGTPase family. Type 2 subfamily.

This Shewanella pealeana (strain ATCC 700345 / ANG-SQ1) protein is Deoxyguanosinetriphosphate triphosphohydrolase-like protein.